We begin with the raw amino-acid sequence, 805 residues long: Leucine--tRNA ligase (805 aa).

A 'HIGH' region motif is present at residues 40 to 51 (PYPSGSGLHVGH). The 'KMSKS' region signature appears at 576–580 (KMSKS). Residue lysine 579 participates in ATP binding.

Belongs to the class-I aminoacyl-tRNA synthetase family.

It is found in the cytoplasm. The catalysed reaction is tRNA(Leu) + L-leucine + ATP = L-leucyl-tRNA(Leu) + AMP + diphosphate. The sequence is that of Leucine--tRNA ligase from Chloroherpeton thalassium (strain ATCC 35110 / GB-78).